A 610-amino-acid chain; its full sequence is Elongation factor 4 (610 aa).

Residues 11 to 193 enclose the tr-type G domain; sequence EKIRNFSIIA…QIVEKVPAPT (183 aa). Residues 23–28 and 140–143 each bind GTP; these read DHGKST and NKID.

Belongs to the TRAFAC class translation factor GTPase superfamily. Classic translation factor GTPase family. LepA subfamily.

The protein resides in the cell membrane. The enzyme catalyses GTP + H2O = GDP + phosphate + H(+). Functionally, required for accurate and efficient protein synthesis under certain stress conditions. May act as a fidelity factor of the translation reaction, by catalyzing a one-codon backward translocation of tRNAs on improperly translocated ribosomes. Back-translocation proceeds from a post-translocation (POST) complex to a pre-translocation (PRE) complex, thus giving elongation factor G a second chance to translocate the tRNAs correctly. Binds to ribosomes in a GTP-dependent manner. The protein is Elongation factor 4 of Streptococcus suis (strain 98HAH33).